The following is a 643-amino-acid chain: Asparagine synthetase domain-containing protein 1 (643 aa).

Catalysis depends on Cys2, which acts as the For GATase activity. In terms of domain architecture, Glutamine amidotransferase type-2 spans 2 to 184; sequence CGICCSVNFS…ASGLFRIDLK (183 aa). The Asparagine synthetase domain maps to 285–601; that stretch reads QFIDVLSVAV…GLTASALLPK (317 aa).

The chain is Asparagine synthetase domain-containing protein 1 (ASNSD1) from Homo sapiens (Human).